Here is a 443-residue protein sequence, read N- to C-terminus: F-box only protein 39 (443 aa).

In terms of domain architecture, F-box spans 13–59 (QSCWATLPDVCLRRVFWWLGDRDRSRAALVCRKWNQIMYSADLWRYR).

In terms of assembly, directly interacts with SKP1 and CUL1.

In terms of biological role, substrate-recognition component of the SCF (SKP1-CUL1-F-box protein)-type E3 ubiquitin ligase complex. In Rattus norvegicus (Rat), this protein is F-box only protein 39 (Fbxo39).